Here is a 170-residue protein sequence, read N- to C-terminus: NADH-quinone oxidoreductase subunit B (170 aa).

Positions 46, 47, 111, and 141 each coordinate [4Fe-4S] cluster.

Belongs to the complex I 20 kDa subunit family. NDH-1 is composed of 14 different subunits. Subunits NuoB, C, D, E, F, and G constitute the peripheral sector of the complex. Requires [4Fe-4S] cluster as cofactor.

It localises to the cell membrane. It carries out the reaction a quinone + NADH + 5 H(+)(in) = a quinol + NAD(+) + 4 H(+)(out). Its function is as follows. NDH-1 shuttles electrons from NADH, via FMN and iron-sulfur (Fe-S) centers, to quinones in the respiratory chain. The immediate electron acceptor for the enzyme in this species is believed to be a menaquinone. Couples the redox reaction to proton translocation (for every two electrons transferred, four hydrogen ions are translocated across the cytoplasmic membrane), and thus conserves the redox energy in a proton gradient. In Geobacillus thermodenitrificans (strain NG80-2), this protein is NADH-quinone oxidoreductase subunit B.